Reading from the N-terminus, the 937-residue chain is CAP-Gly domain-containing linker protein 1 homolog (937 aa).

In terms of domain architecture, CAP-Gly spans 39 to 81 (GPIHGKDGMFCGIELLEPNGKHDGTFQGVSYFIATPYHGIFAP). 2 disordered regions span residues 90–131 (EELP…VMST) and 264–548 (LPND…SRLQ). A compositionally biased stretch (polar residues) spans 268-281 (LNANFSNKNSTTTF). A compositionally biased stretch (basic and acidic residues) spans 285 to 295 (ETPKVEIRENG). Over residues 296 to 309 (NLDNSIETPPQQSP) the composition is skewed to polar residues. Composition is skewed to basic and acidic residues over residues 317–353 (HESD…KEEP), 383–396 (IEAE…EIKS), 409–424 (PQKE…ETPR), and 463–473 (AKERVEKEKKI). Positions 492 to 501 (SSIPSTSSAS) are enriched in low complexity. 2 coiled-coil regions span residues 566–740 (EDNE…VDEI) and 773–800 (QQIE…DLMQ). 2 disordered regions span residues 819-866 (MESR…DSMN) and 916-937 (PTIK…GLVM). The segment covering 832–844 (RSRSSASGSRPIS) has biased composition (low complexity). Residues 845 to 858 (MATSNGGDQRLSTS) are compositionally biased toward polar residues.

The sequence is that of CAP-Gly domain-containing linker protein 1 homolog from Caenorhabditis elegans.